The chain runs to 561 residues: Putative transport protein YbjL (561 aa).

The next 5 helical transmembrane spans lie at Leu8–Gly28, Leu32–Gln52, Phe66–Phe86, Met94–Phe114, and Asn158–Ala178. 2 consecutive RCK C-terminal domains span residues Arg200–Asn288 and Val292–Phe373. 5 helical membrane-spanning segments follow: residues Leu383 to Phe403, Phe406 to Leu426, Phe447 to Gly467, Met475 to Ala495, and Ala540 to Leu560.

This sequence belongs to the AAE transporter (TC 2.A.81) family. YbjL subfamily.

Its subcellular location is the cell membrane. The chain is Putative transport protein YbjL from Salmonella paratyphi C (strain RKS4594).